A 269-amino-acid chain; its full sequence is uncharacterized protein (269 aa).

The disordered stretch occupies residues 1–21; the sequence is MAYSSSNSDIEDDSSKSNSNL.

This is an uncharacterized protein from Homo sapiens (Human).